The chain runs to 440 residues: Gap junction gamma-2 protein (440 aa).

Residues Met-1–Thr-21 are Cytoplasmic-facing. Residues Phe-22 to Gly-42 form a helical membrane-spanning segment. Residues Gly-43 to Arg-78 lie on the Extracellular side of the membrane. Residues Phe-79–Val-99 form a helical membrane-spanning segment. Over His-100–Glu-223 the chain is Cytoplasmic. The segment at Gln-108–Gly-199 is disordered. Over residues Arg-112–Pro-124 the composition is skewed to basic residues. Acidic residues predominate over residues Leu-150–Thr-173. Residues Val-224–Cys-244 form a helical membrane-spanning segment. The Extracellular segment spans residues Ser-245–Thr-264. A helical membrane pass occupies residues Val-265 to Met-285. The Cytoplasmic portion of the chain corresponds to Ala-286–Ile-440. Residues Ala-368 to Ile-440 form a disordered region. The residue at position 372 (Ser-372) is a Phosphoserine. Low complexity predominate over residues Ala-380–Gly-401.

This sequence belongs to the connexin family. Gamma-type subfamily. A connexon is composed of a hexamer of connexins. Interacts with TJP1. Mainly expressed by oligodendrocytes in the central nervous system. Expressed in optic nerve (at protein level).

Its subcellular location is the cell membrane. The protein localises to the cell junction. It localises to the gap junction. Functionally, one gap junction consists of a cluster of closely packed pairs of transmembrane channels, the connexons, through which materials of low MW diffuse from one cell to a neighboring cell. May play a role in myelination in central and peripheral nervous systems. The protein is Gap junction gamma-2 protein (Gjc2) of Rattus norvegicus (Rat).